Consider the following 330-residue polypeptide: Ketol-acid reductoisomerase (NADP(+)) (330 aa).

Residues 1–181 enclose the KARI N-terminal Rossmann domain; sequence MKMYYESDVN…GFTKAGVIET (181 aa). NADP(+) contacts are provided by residues 24–27, Arg47, Ser52, and 82–85; these read YGSQ and DEIQ. His107 is a catalytic residue. Position 133 (Gly133) interacts with NADP(+). The KARI C-terminal knotted domain occupies 182–327; sequence TFKEETETDL…ERLRKACGLQ (146 aa). Positions 190, 194, 226, and 230 each coordinate Mg(2+). Position 251 (Ser251) interacts with substrate.

It belongs to the ketol-acid reductoisomerase family. The cofactor is Mg(2+).

The enzyme catalyses (2R)-2,3-dihydroxy-3-methylbutanoate + NADP(+) = (2S)-2-acetolactate + NADPH + H(+). The catalysed reaction is (2R,3R)-2,3-dihydroxy-3-methylpentanoate + NADP(+) = (S)-2-ethyl-2-hydroxy-3-oxobutanoate + NADPH + H(+). The protein operates within amino-acid biosynthesis; L-isoleucine biosynthesis; L-isoleucine from 2-oxobutanoate: step 2/4. Its pathway is amino-acid biosynthesis; L-valine biosynthesis; L-valine from pyruvate: step 2/4. Its function is as follows. Involved in the biosynthesis of branched-chain amino acids (BCAA). Catalyzes an alkyl-migration followed by a ketol-acid reduction of (S)-2-acetolactate (S2AL) to yield (R)-2,3-dihydroxy-isovalerate. In the isomerase reaction, S2AL is rearranged via a Mg-dependent methyl migration to produce 3-hydroxy-3-methyl-2-ketobutyrate (HMKB). In the reductase reaction, this 2-ketoacid undergoes a metal-dependent reduction by NADPH to yield (R)-2,3-dihydroxy-isovalerate. The sequence is that of Ketol-acid reductoisomerase (NADP(+)) from Methanobrevibacter smithii (strain ATCC 35061 / DSM 861 / OCM 144 / PS).